The following is a 444-amino-acid chain: Methylenetetrahydrofolate--tRNA-(uracil-5-)-methyltransferase TrmFO (444 aa).

FAD is bound at residue 10–15 (GAGLAG).

It belongs to the MnmG family. TrmFO subfamily. FAD serves as cofactor.

Its subcellular location is the cytoplasm. It carries out the reaction uridine(54) in tRNA + (6R)-5,10-methylene-5,6,7,8-tetrahydrofolate + NADH + H(+) = 5-methyluridine(54) in tRNA + (6S)-5,6,7,8-tetrahydrofolate + NAD(+). The enzyme catalyses uridine(54) in tRNA + (6R)-5,10-methylene-5,6,7,8-tetrahydrofolate + NADPH + H(+) = 5-methyluridine(54) in tRNA + (6S)-5,6,7,8-tetrahydrofolate + NADP(+). Catalyzes the folate-dependent formation of 5-methyl-uridine at position 54 (M-5-U54) in all tRNAs. This chain is Methylenetetrahydrofolate--tRNA-(uracil-5-)-methyltransferase TrmFO, found in Streptococcus pneumoniae serotype 2 (strain D39 / NCTC 7466).